Consider the following 541-residue polypeptide: Major facilitator-type transporter ecdD (541 aa).

Residues 15–35 (AWPAILISGFVAFGGILFGYD) traverse the membrane as a helical segment. N-linked (GlcNAc...) asparagine glycosylation is present at Asn-64. 4 helical membrane passes run 72–92 (AIVS…SPMG), 106–126 (GIFV…PFLA), 129–149 (FFAG…QSET), and 156–176 (GFIV…ASVL). N-linked (GlcNAc...) asparagine glycosylation is found at Asn-178 and Asn-184. The chain crosses the membrane as a helical span at residues 191-211 (IPIAVQFAWSIILVGGMLILP). A glycan (N-linked (GlcNAc...) asparagine) is linked at Asn-253. A run of 6 helical transmembrane segments spans residues 277 to 297 (LVTG…FIMY), 313 to 333 (VITL…LYAI), 340 to 360 (PVLL…AVLG), 384 to 404 (IAFI…SAWV), 418 to 440 (SLSM…TPYL), and 454 to 474 (IFFI…FMIY).

The protein belongs to the major facilitator superfamily. Sugar transporter (TC 2.A.1.1) family.

It localises to the membrane. The sequence is that of Major facilitator-type transporter ecdD from Aspergillus rugulosus (Emericella rugulosa).